The sequence spans 277 residues: Ribosomal protein L11 methyltransferase (277 aa).

S-adenosyl-L-methionine contacts are provided by Thr130, Gly151, Asp172, and Asn213.

This sequence belongs to the methyltransferase superfamily. PrmA family.

The protein resides in the cytoplasm. The catalysed reaction is L-lysyl-[protein] + 3 S-adenosyl-L-methionine = N(6),N(6),N(6)-trimethyl-L-lysyl-[protein] + 3 S-adenosyl-L-homocysteine + 3 H(+). Functionally, methylates ribosomal protein L11. This is Ribosomal protein L11 methyltransferase from Campylobacter concisus (strain 13826).